Consider the following 586-residue polypeptide: Pyruvate kinase (586 aa).

Substrate is bound at residue Arg-32. K(+) is bound by residues Asn-34, Ser-36, Asp-66, and Thr-67. 34-37 provides a ligand contact to ATP; it reads NFSH. 2 residues coordinate ATP: Arg-73 and Lys-156. Residue Glu-222 participates in Mg(2+) binding. Gly-245, Asp-246, and Thr-278 together coordinate substrate. Asp-246 contributes to the Mg(2+) binding site.

It belongs to the pyruvate kinase family. This sequence in the C-terminal section; belongs to the PEP-utilizing enzyme family. The cofactor is Mg(2+). Requires K(+) as cofactor.

It catalyses the reaction pyruvate + ATP = phosphoenolpyruvate + ADP + H(+). It participates in carbohydrate degradation; glycolysis; pyruvate from D-glyceraldehyde 3-phosphate: step 5/5. This Staphylococcus haemolyticus (strain JCSC1435) protein is Pyruvate kinase (pyk).